Reading from the N-terminus, the 285-residue chain is Small ribosomal subunit protein mS23 (285 aa).

The protein belongs to the mitochondrion-specific ribosomal protein mS23 family. In terms of assembly, component of the mitochondrial small ribosomal subunit.

It localises to the mitochondrion. The sequence is that of Small ribosomal subunit protein mS23 (RSM25) from Debaryomyces hansenii (strain ATCC 36239 / CBS 767 / BCRC 21394 / JCM 1990 / NBRC 0083 / IGC 2968) (Yeast).